The primary structure comprises 275 residues: Galaxin-2 (275 aa).

Residues 1 to 20 form the signal peptide; it reads MTRFTSIGLCAVLLFNVCSC.

As to expression, component of the acid-insoluble and acid-soluble organic matrix of the aragonitic skeleton (at protein level).

The protein localises to the secreted. This chain is Galaxin-2, found in Acropora millepora (Staghorn coral).